Here is a 175-residue protein sequence, read N- to C-terminus: Adenine phosphoribosyltransferase (175 aa).

It belongs to the purine/pyrimidine phosphoribosyltransferase family. In terms of assembly, homodimer.

Its subcellular location is the cytoplasm. It catalyses the reaction AMP + diphosphate = 5-phospho-alpha-D-ribose 1-diphosphate + adenine. It participates in purine metabolism; AMP biosynthesis via salvage pathway; AMP from adenine: step 1/1. Its function is as follows. Catalyzes a salvage reaction resulting in the formation of AMP, that is energically less costly than de novo synthesis. In Synechococcus sp. (strain JA-3-3Ab) (Cyanobacteria bacterium Yellowstone A-Prime), this protein is Adenine phosphoribosyltransferase.